Reading from the N-terminus, the 1073-residue chain is 3-hydroxy-3-methylglutaryl-coenzyme A reductase 1 (1073 aa).

The next 8 membrane-spanning stretches (helical) occupy residues 23 to 43 (FMVVPALLASIAYLSIIDDYI), 181 to 201 (FDILLIFVAYLGMWYALIKVF), 211 to 231 (FWLAFSTLTSSTFAFLLALLV), 298 to 318 (HLVVIGGLLSCAIYAHHLTGL), 326 to 346 (SLILSFDLILVYTFFSAILGL), 399 to 419 (IAYFKVIMSLGFFAFHAFWLG), 459 to 479 (GTVVTILPTIFFMPSGFMVQL), and 498 to 518 (IISKFLVFGFALSIVTNVYFL). The region spanning 182-346 (DILLIFVAYL…YTFFSAILGL (165 aa)) is the SSD domain. Residues 542–565 (SSVTATTTTTATGTTSSGAATSKT) show a composition bias toward low complexity. The tract at residues 542 to 589 (SSVTATTTTTATGTTSSGAATSKTIGNNKGLKSVQEIPDNEDESSDEE) is disordered. Over residues 579–589 (PDNEDESSDEE) the composition is skewed to acidic residues. Catalysis depends on Glu-714, which acts as the Charge relay system. A CoA-binding site is contributed by 720-726 (STMRGCK). NADP(+)-binding positions include 781–783 (SRF) and 808–816 (DAMGMNMIS). The active-site Charge relay system is Lys-848. 877-879 (VLK) provides a ligand contact to CoA. Asp-924 acts as the Charge relay system in catalysis. The helical transmembrane segment at 997-1017 (IVASAVLAAELSLCSALAAGH) threads the bilayer. 1021–1022 (SH) serves as a coordination point for CoA. The active-site Proton donor is the His-1022. Residues 1025-1056 (HNRSKAPAAGATTTTTPAITDSKASNGSIASN) are disordered. 1026–1027 (NR) lines the NADP(+) pocket. The span at 1030 to 1042 (APAAGATTTTTPA) shows a compositional bias: low complexity. The segment covering 1046–1055 (SKASNGSIAS) has biased composition (polar residues).

This sequence belongs to the HMG-CoA reductase family.

It localises to the endoplasmic reticulum membrane. It catalyses the reaction (R)-mevalonate + 2 NADP(+) + CoA = (3S)-3-hydroxy-3-methylglutaryl-CoA + 2 NADPH + 2 H(+). It participates in metabolic intermediate biosynthesis; (R)-mevalonate biosynthesis; (R)-mevalonate from acetyl-CoA: step 3/3. In terms of biological role, HMG-CoA reductase; part of the first module of ergosterol biosynthesis pathway that includes the early steps of the pathway, conserved across all eukaryotes, and which results in the formation of mevalonate from acetyl-coenzyme A (acetyl-CoA). HMG1 catalyzes the reduction of hydroxymethylglutaryl-CoA (HMG-CoA) to mevalonate. The first module starts with the action of the cytosolic acetyl-CoA acetyltransferase ERG10 that catalyzes the formation of acetoacetyl-CoA. The hydroxymethylglutaryl-CoA synthase ERG13 then condenses acetyl-CoA with acetoacetyl-CoA to form HMG-CoA. The 3-hydroxy-3-methylglutaryl-coenzyme A (HMG-CoA) reductase HMG1 finally reduces HMG-CoA to produce mevalonate. The polypeptide is 3-hydroxy-3-methylglutaryl-coenzyme A reductase 1 (Candida albicans (strain SC5314 / ATCC MYA-2876) (Yeast)).